The sequence spans 345 residues: Holliday junction branch migration complex subunit RuvB (345 aa).

The tract at residues Thr-4 to Tyr-185 is large ATPase domain (RuvB-L). Residues Leu-24, Arg-25, Gly-66, Lys-69, Thr-70, Thr-71, Glu-132 to Tyr-134, Arg-175, Tyr-185, and Arg-222 each bind ATP. Thr-70 serves as a coordination point for Mg(2+). Residues Thr-186–Asp-256 form a small ATPAse domain (RuvB-S) region. Positions Lys-259–Gln-345 are head domain (RuvB-H). The DNA site is built by Arg-295, Arg-314, and Arg-319.

This sequence belongs to the RuvB family. Homohexamer. Forms an RuvA(8)-RuvB(12)-Holliday junction (HJ) complex. HJ DNA is sandwiched between 2 RuvA tetramers; dsDNA enters through RuvA and exits via RuvB. An RuvB hexamer assembles on each DNA strand where it exits the tetramer. Each RuvB hexamer is contacted by two RuvA subunits (via domain III) on 2 adjacent RuvB subunits; this complex drives branch migration. In the full resolvosome a probable DNA-RuvA(4)-RuvB(12)-RuvC(2) complex forms which resolves the HJ.

Its subcellular location is the cytoplasm. The enzyme catalyses ATP + H2O = ADP + phosphate + H(+). In terms of biological role, the RuvA-RuvB-RuvC complex processes Holliday junction (HJ) DNA during genetic recombination and DNA repair, while the RuvA-RuvB complex plays an important role in the rescue of blocked DNA replication forks via replication fork reversal (RFR). RuvA specifically binds to HJ cruciform DNA, conferring on it an open structure. The RuvB hexamer acts as an ATP-dependent pump, pulling dsDNA into and through the RuvAB complex. RuvB forms 2 homohexamers on either side of HJ DNA bound by 1 or 2 RuvA tetramers; 4 subunits per hexamer contact DNA at a time. Coordinated motions by a converter formed by DNA-disengaged RuvB subunits stimulates ATP hydrolysis and nucleotide exchange. Immobilization of the converter enables RuvB to convert the ATP-contained energy into a lever motion, pulling 2 nucleotides of DNA out of the RuvA tetramer per ATP hydrolyzed, thus driving DNA branch migration. The RuvB motors rotate together with the DNA substrate, which together with the progressing nucleotide cycle form the mechanistic basis for DNA recombination by continuous HJ branch migration. Branch migration allows RuvC to scan DNA until it finds its consensus sequence, where it cleaves and resolves cruciform DNA. The chain is Holliday junction branch migration complex subunit RuvB from Methylobacillus flagellatus (strain ATCC 51484 / DSM 6875 / VKM B-1610 / KT).